The chain runs to 305 residues: MDDKELIEYFKSQMKEDPDMASAVAAIRTLLEFLKRDKGETIQGLRANLTSAIETLCGVDSSVAVSSGGELFLRFISLASLEYSDYSKCKKIMIERGELFLRRISLSRNKIADLCHTFIKDGATILTHAYSRVVLRVLEAAVAAKKRFSVYVTESQPDLSGKKMAKALCHLNVPVTVVLDAAVGYIMEKADLVIVGAEGVVENGGIINKIGTNQMAVCAKAQNKPFYVVAESFKFVRLFPLNQQDVPDKFKYKADTLKVAQTGQDLKEEHPWVDYTAPSLITLLFTDLGVLTPSAVSDELIKLYL.

Lys35 bears the N6-acetyllysine mark.

It belongs to the eIF-2B alpha/beta/delta subunits family. Component of the translation initiation factor 2B (eIF2B) complex which is a heterodecamer of two sets of five different subunits: alpha, beta, gamma, delta and epsilon. Subunits alpha, beta and delta comprise a regulatory subcomplex and subunits epsilon and gamma comprise a catalytic subcomplex. Within the complex, the hexameric regulatory complex resides at the center, with the two heterodimeric catalytic subcomplexes bound on opposite sides.

The protein resides in the cytoplasm. The protein localises to the cytosol. With respect to regulation, activated by the chemical integrated stress response (ISR) inhibitor ISRIB which stimulates guanine nucleotide exchange factor activity for both phosphorylated and unphosphorylated eIF2. Functionally, acts as a component of the translation initiation factor 2B (eIF2B) complex, which catalyzes the exchange of GDP for GTP on eukaryotic initiation factor 2 (eIF2) gamma subunit. Its guanine nucleotide exchange factor activity is repressed when bound to eIF2 complex phosphorylated on the alpha subunit, thereby limiting the amount of methionyl-initiator methionine tRNA available to the ribosome and consequently global translation is repressed. In Pongo abelii (Sumatran orangutan), this protein is Translation initiation factor eIF2B subunit alpha (EIF2B1).